We begin with the raw amino-acid sequence, 330 residues long: Mas-related G-protein coupled receptor member B8 (330 aa).

At 1 to 33 (MDSSFPDWNIEFREQNESYFMESSSCDMSLAMS) the chain is on the extracellular side. N16 carries N-linked (GlcNAc...) asparagine glycosylation. The chain crosses the membrane as a helical span at residues 34–54 (LLSIIIAIIGLTGNVIVLQLL). Over 55–62 (GFHMHRNA) the chain is Cytoplasmic. The chain crosses the membrane as a helical span at residues 63 to 83 (FSVYIFNLSGANFLFLCTHIV). At 84 to 101 (FSLENLIRQFHYIDIHMA) the chain is on the extracellular side. Residues 102-122 (LFSVNVTILAYLAGVSMITAI) form a helical membrane-spanning segment. The Cytoplasmic segment spans residues 123 to 146 (SVEYWLSVLWPTWYHAQRPKHTST). The chain crosses the membrane as a helical span at residues 147–167 (VICTLLWVFSLLLTLWNWIIC). The Extracellular portion of the chain corresponds to 168-177 (KVLDYIYNWD). A helical transmembrane segment spans residues 178 to 198 (MCWKLALIIVVWLLVLFVVLS). Residues 199–219 (RSNQALLFRVFCGSQQTPVTR) are Cytoplasmic-facing. A helical transmembrane segment spans residues 220–240 (LLVTIMLTALVVLICGFGIGI). Residues 241-260 (CFFYWKKEENSIMPCGYFYE) are Extracellular-facing. Residues 261–281 (TILLLSGVNSCANPIICLFVG) form a helical membrane-spanning segment. Residues 282-330 (SIKHCQFQCGTLRLILQRAIQESPEEEDEEVEEVVEQEGGEEDEESTTL) are Cytoplasmic-facing. The interval 302–330 (QESPEEEDEEVEEVVEQEGGEEDEESTTL) is disordered. A compositionally biased stretch (acidic residues) spans 304-330 (SPEEEDEEVEEVVEQEGGEEDEESTTL).

This sequence belongs to the G-protein coupled receptor 1 family. Mas subfamily.

Its subcellular location is the membrane. Its function is as follows. Orphan receptor. Probably involved in the function of nociceptive neurons. May regulate nociceptor function and/or development, including the sensation or modulation of pain. This Mus musculus (Mouse) protein is Mas-related G-protein coupled receptor member B8 (Mrgprb8).